The following is a 267-amino-acid chain: UPF0328 protein ECU06_0070 (267 aa).

It belongs to the UPF0328 family.

The chain is UPF0328 protein ECU06_0070 from Encephalitozoon cuniculi (strain GB-M1) (Microsporidian parasite).